The following is a 757-amino-acid chain: Polymeric immunoglobulin receptor (757 aa).

The N-terminal stretch at 1-18 (MSRLFLACLLAIFPVVSM) is a signal peptide. An Ig-like V-type 1; required for binding to polymeric IgA and IgM domain is found at 19-126 (KSPIFGPEEV…RGLNFDVSLE (108 aa)). At 19-632 (KSPIFGPEEV…TGYSGSSKAL (614 aa)) the chain is on the extracellular side. 7 disulfide bridges follow: Cys40/Cys110, Cys56/Cys64, Cys152/Cys220, Cys257/Cys324, Cys271/Cys279, Cys370/Cys440, and Cys384/Cys394. An N-linked (GlcNAc...) asparagine glycan is attached at Asn83. Ig-like V-type domains are found at residues 145-237 (GRTV…DLQV), 250-341 (RSSV…VQAW), 353-457 (ASPS…LKVV), and 461-560 (PSLK…VYVA). N-linked (GlcNAc...) asparagine glycosylation is found at Asn420 and Asn468. Disulfide bonds link Cys481-Cys543, Cys485-Cys519, and Cys495-Cys502. The tract at residues 607–627 (KDAAGGPGAPADPGRPTGYSG) is disordered. The helical transmembrane segment at 633-653 (VSTLVPLALVLVAGVVAIGVV) threads the bilayer. Over 654–757 (RARHRKNVDR…AATQNGPTEA (104 aa)) the chain is Cytoplasmic. 4 positions are modified to phosphoserine: Ser665, Ser674, Ser681, and Ser727. The segment covering 679–688 (ENSRDFEGRD) has biased composition (basic and acidic residues). The segment at 679-730 (ENSRDFEGRDNMGASPEAQETSLGGKDEFATTTEDTVESKEPKKAKRSSKEE) is disordered.

In terms of assembly, interacts (mainly via CDR1-like domain) with dimeric IgA. Interacts (mainly via CDR2-like domain) with pentameric IgM. Either free or part of the secretory IgA (sIgA) complex that consists of two, four or five IgA monomers, and two additional non-Ig polypeptides, namely the JCHAIN and the secretory component (the proteolytic product of PIGR). Free secretory component interacts with bacterial antigens toxA of C.difficile and eae of E.coli. In terms of processing, in the absence of dimeric IgA, Ser-727 is phosphorylated which allows PIGR to function normally. Post-translationally, N-glycosylated. N-glycosylation is required for anchoring IgA molecules to mucus, but is not necessary for Ig binding. In terms of tissue distribution, found in mammary gland, jejunum, lung, kidney and small intestine.

It is found in the cell membrane. Its subcellular location is the secreted. Functionally, mediates selective transcytosis of polymeric IgA and IgM across mucosal epithelial cells. Binds polymeric IgA and IgM at the basolateral surface of epithelial cells. The complex is then transported across the cell to be secreted at the apical surface. During this process, a cleavage occurs that separates the extracellular (known as the secretory component) from the transmembrane segment. In terms of biological role, through its N-linked glycans ensures anchoring of secretory IgA (sIgA) molecules to mucus lining the epithelial surface to neutralize extracellular pathogens. On its own (free form) may act as a non-specific microbial scavenger to prevent pathogen interaction with epithelial cells. The chain is Polymeric immunoglobulin receptor (PIGR) from Bos taurus (Bovine).